The sequence spans 252 residues: 5'-nucleotidase SurE (252 aa).

Positions 8, 9, 39, and 91 each coordinate a divalent metal cation.

Belongs to the SurE nucleotidase family. It depends on a divalent metal cation as a cofactor.

It localises to the cytoplasm. It catalyses the reaction a ribonucleoside 5'-phosphate + H2O = a ribonucleoside + phosphate. Functionally, nucleotidase that shows phosphatase activity on nucleoside 5'-monophosphates. The sequence is that of 5'-nucleotidase SurE from Bordetella bronchiseptica (strain ATCC BAA-588 / NCTC 13252 / RB50) (Alcaligenes bronchisepticus).